We begin with the raw amino-acid sequence, 473 residues long: Spliceosome-associated protein CWC27 homolog (473 aa).

N-acetylserine is present on Ser-2. The PPIase cyclophilin-type domain maps to 11-166; that stretch reads TNGKVLLKTT…NPHKIKSCEV (156 aa). The span at 177 to 193 shows a compositional bias: basic and acidic residues; it reads REIKRPKKEKPEEEVKK. Disordered stretches follow at residues 177–386 and 399–473; these read REIK…EDQT and QAIA…KERR. Residues 206–230 are a coiled coil; the sequence is SFGEEAEEEEEEVNRVSQSMKGKSK. A compositionally biased stretch (basic and acidic residues) spans 231 to 241; the sequence is SSHDLLKDDPH. A compositionally biased stretch (acidic residues) spans 257–266; that stretch reads GDLDDGGEGE. Basic and acidic residues-rich tracts occupy residues 267-287, 305-348, and 360-372; these read SAEH…ERIA, EVEK…KRSE, and EYRR…EALR. A coiled-coil region spans residues 305 to 378; sequence EVEKKSVNRS…EALRKQQSKK (74 aa). At Ser-347 the chain carries Phosphoserine. Residues 405 to 419 show a composition bias toward acidic residues; it reads PENDIPETEVEDDEG. Basic and acidic residues-rich tracts occupy residues 426 to 438 and 458 to 473; these read QFED…KDAS and RREE…KERR.

This sequence belongs to the cyclophilin-type PPIase family. Part of the activated spliceosome B/catalytic step 1 spliceosome, one of the forms of the spliceosome which has a well-formed active site but still cannot catalyze the branching reaction and is composed at least of 52 proteins, the U2, U5 and U6 snRNAs and the pre-mRNA. Recruited during early steps of activated spliceosome B maturation, it is probably one of the first proteins released from this complex as he matures to the spliceosome C complex. Component of the minor spliceosome, which splices U12-type introns.

Its subcellular location is the nucleus. In terms of biological role, as part of the spliceosome, plays a role in pre-mRNA splicing. Probable inactive PPIase with no peptidyl-prolyl cis-trans isomerase activity. As a component of the minor spliceosome, involved in the splicing of U12-type introns in pre-mRNAs. The chain is Spliceosome-associated protein CWC27 homolog from Pongo abelii (Sumatran orangutan).